Consider the following 542-residue polypeptide: CTP synthase (542 aa).

The interval 1-265 (MTRYVFITGG…DREILAHFQM (265 aa)) is amidoligase domain. Residue Ser-13 participates in CTP binding. Residue Ser-13 coordinates UTP. ATP contacts are provided by residues 14–19 (SLGKGL) and Asp-71. Asp-71 and Glu-139 together coordinate Mg(2+). Residues 146-148 (DIE), 186-191 (KTKPTQ), and Lys-222 contribute to the CTP site. UTP contacts are provided by residues 186–191 (KTKPTQ) and Lys-222. 238–240 (RDV) contributes to the ATP binding site. Residues 291–541 (TIAIVGKYTG…IAAAIDQSRL (251 aa)) form the Glutamine amidotransferase type-1 domain. Gly-353 lines the L-glutamine pocket. Catalysis depends on Cys-380, which acts as the Nucleophile; for glutamine hydrolysis. Residues 381–384 (FGMQ), Glu-404, and Arg-469 each bind L-glutamine. Residues His-514 and Glu-516 contribute to the active site.

It belongs to the CTP synthase family. As to quaternary structure, homotetramer.

The catalysed reaction is UTP + L-glutamine + ATP + H2O = CTP + L-glutamate + ADP + phosphate + 2 H(+). It catalyses the reaction L-glutamine + H2O = L-glutamate + NH4(+). It carries out the reaction UTP + NH4(+) + ATP = CTP + ADP + phosphate + 2 H(+). It functions in the pathway pyrimidine metabolism; CTP biosynthesis via de novo pathway; CTP from UDP: step 2/2. With respect to regulation, allosterically activated by GTP, when glutamine is the substrate; GTP has no effect on the reaction when ammonia is the substrate. The allosteric effector GTP functions by stabilizing the protein conformation that binds the tetrahedral intermediate(s) formed during glutamine hydrolysis. Inhibited by the product CTP, via allosteric rather than competitive inhibition. In terms of biological role, catalyzes the ATP-dependent amination of UTP to CTP with either L-glutamine or ammonia as the source of nitrogen. Regulates intracellular CTP levels through interactions with the four ribonucleotide triphosphates. The chain is CTP synthase from Methylorubrum extorquens (strain CM4 / NCIMB 13688) (Methylobacterium extorquens).